Reading from the N-terminus, the 289-residue chain is Protease HtpX homolog (289 aa).

Helical transmembrane passes span 9–29 and 31–51; these read TGVL…LIGG and GGMI…YWFS. Zn(2+) is bound at residue His133. Glu134 is a catalytic residue. His137 contributes to the Zn(2+) binding site. The next 2 helical transmembrane spans lie at 143–163 and 182–202; these read TLIQ…VDFA and IGLI…QLAI. Position 207 (Glu207) interacts with Zn(2+).

It belongs to the peptidase M48B family. Zn(2+) serves as cofactor.

The protein resides in the cell membrane. This Pyrococcus abyssi (strain GE5 / Orsay) protein is Protease HtpX homolog.